Consider the following 376-residue polypeptide: N-acetyldiaminopimelate deacetylase (376 aa).

Residue D69 is part of the active site. E128 serves as the catalytic Proton acceptor.

It belongs to the peptidase M20A family. N-acetyldiaminopimelate deacetylase subfamily.

It catalyses the reaction N-acetyl-(2S,6S)-2,6-diaminopimelate + H2O = (2S,6S)-2,6-diaminopimelate + acetate. The protein operates within amino-acid biosynthesis; L-lysine biosynthesis via DAP pathway; LL-2,6-diaminopimelate from (S)-tetrahydrodipicolinate (acetylase route): step 3/3. Functionally, catalyzes the conversion of N-acetyl-diaminopimelate to diaminopimelate and acetate. The protein is N-acetyldiaminopimelate deacetylase of Bacillus cereus (strain AH820).